The primary structure comprises 490 residues: Protein nucleotidyltransferase YdiU (490 aa).

The ATP site is built by G92, G94, R95, K114, D126, G127, R177, and R184. Catalysis depends on D256, which acts as the Proton acceptor. Residues N257 and D266 each contribute to the Mg(2+) site. D266 serves as a coordination point for ATP.

It belongs to the SELO family. Mg(2+) serves as cofactor. Mn(2+) is required as a cofactor.

It carries out the reaction L-seryl-[protein] + ATP = 3-O-(5'-adenylyl)-L-seryl-[protein] + diphosphate. The enzyme catalyses L-threonyl-[protein] + ATP = 3-O-(5'-adenylyl)-L-threonyl-[protein] + diphosphate. The catalysed reaction is L-tyrosyl-[protein] + ATP = O-(5'-adenylyl)-L-tyrosyl-[protein] + diphosphate. It catalyses the reaction L-histidyl-[protein] + UTP = N(tele)-(5'-uridylyl)-L-histidyl-[protein] + diphosphate. It carries out the reaction L-seryl-[protein] + UTP = O-(5'-uridylyl)-L-seryl-[protein] + diphosphate. The enzyme catalyses L-tyrosyl-[protein] + UTP = O-(5'-uridylyl)-L-tyrosyl-[protein] + diphosphate. In terms of biological role, nucleotidyltransferase involved in the post-translational modification of proteins. It can catalyze the addition of adenosine monophosphate (AMP) or uridine monophosphate (UMP) to a protein, resulting in modifications known as AMPylation and UMPylation. This is Protein nucleotidyltransferase YdiU from Bordetella avium (strain 197N).